An 862-amino-acid polypeptide reads, in one-letter code: Valine--tRNA ligase (862 aa).

The short motif at 44-53 (NVTGSLHMGH) is the 'HIGH' region element. Residues Cys176, Cys179, Cys344, Cys347, Cys417, Cys420, Cys438, and Cys441 each contribute to the Zn(2+) site. Positions 528 to 532 (KMSKS) match the 'KMSKS' region motif. Lys531 serves as a coordination point for ATP. A coiled-coil region spans residues 802–862 (RRRQEKRLKE…RIREALSQIG (61 aa)).

This sequence belongs to the class-I aminoacyl-tRNA synthetase family. ValS type 1 subfamily. Monomer. It depends on Zn(2+) as a cofactor.

The protein resides in the cytoplasm. The catalysed reaction is tRNA(Val) + L-valine + ATP = L-valyl-tRNA(Val) + AMP + diphosphate. Catalyzes the attachment of valine to tRNA(Val). As ValRS can inadvertently accommodate and process structurally similar amino acids such as threonine, to avoid such errors, it has a 'posttransfer' editing activity that hydrolyzes mischarged Thr-tRNA(Val) in a tRNA-dependent manner. This is Valine--tRNA ligase from Thermus thermophilus (strain ATCC 27634 / DSM 579 / HB8).